The chain runs to 211 residues: Imidazole glycerol phosphate synthase subunit HisH (211 aa).

The Glutamine amidotransferase type-1 domain occupies 3–211; it reads VVAVIDYEMG…VSQVREKIAA (209 aa). Catalysis depends on C81, which acts as the Nucleophile. Catalysis depends on residues H186 and E188.

In terms of assembly, heterodimer of HisH and HisF.

It is found in the cytoplasm. The catalysed reaction is 5-[(5-phospho-1-deoxy-D-ribulos-1-ylimino)methylamino]-1-(5-phospho-beta-D-ribosyl)imidazole-4-carboxamide + L-glutamine = D-erythro-1-(imidazol-4-yl)glycerol 3-phosphate + 5-amino-1-(5-phospho-beta-D-ribosyl)imidazole-4-carboxamide + L-glutamate + H(+). The enzyme catalyses L-glutamine + H2O = L-glutamate + NH4(+). The protein operates within amino-acid biosynthesis; L-histidine biosynthesis; L-histidine from 5-phospho-alpha-D-ribose 1-diphosphate: step 5/9. Its function is as follows. IGPS catalyzes the conversion of PRFAR and glutamine to IGP, AICAR and glutamate. The HisH subunit catalyzes the hydrolysis of glutamine to glutamate and ammonia as part of the synthesis of IGP and AICAR. The resulting ammonia molecule is channeled to the active site of HisF. This chain is Imidazole glycerol phosphate synthase subunit HisH, found in Nostoc sp. (strain PCC 7120 / SAG 25.82 / UTEX 2576).